The primary structure comprises 299 residues: Apolipoprotein E (299 aa).

The first 18 residues, 1–18 (MKVLCTVLVVTLLAGCQA), serve as a signal peptide directing secretion. The 8 X 22 AA approximate tandem repeats stretch occupies residues 74–245 (VLMEDTMKAV…RLEEVREQME (172 aa)). A run of 8 repeats spans residues 75-95 (LMEDTMKAVKAYKSELEQELV), 96-117 (PMAEDTKARLSKELQAAQARLG), 118-139 (ADMEEVRNRLAQYRSEMQAMLG), 140-161 (QSAEELRARLASHLRKLRKKLL), 162-183 (RDAEDLQKRLAVYKDGASEGAE), 184-206 (RSVSAVRERLESLVEQSRARAAL), 207-225 (TSQPLQERAQAWGKRLRGR), and 224-242 (GRLEEVGSQARDRLEEVRE). Position 137 is a methionine sulfoxide (methionine 137). Serine 141 bears the Phosphoserine mark. Residues 152-162 (HLRKLRKKLLR) form an LDL and other lipoprotein receptors binding region. 156–159 (LRKK) contributes to the heparin binding site. A lipid-binding and lipoprotein association region spans residues 205–273 (ALTSQPLQER…GWFEPMVEDM (69 aa)). 219 to 226 (GKRLRGRL) contacts heparin. The interval 261–273 (RLKGWFEPMVEDM) is specificity for association with VLDL.

This sequence belongs to the apolipoprotein A1/A4/E family. As to quaternary structure, homotetramer. May interact with ABCA1; functionally associated with ABCA1 in the biogenesis of HDLs. May interact with APP/A4 amyloid-beta peptide; the interaction is extremely stable in vitro but its physiological significance is unclear. May interact with MAPT. May interact with MAP2. In the cerebrospinal fluid, interacts with secreted SORL1. Interacts with PMEL; this allows the loading of PMEL luminal fragment on ILVs to induce fibril nucleation. In terms of processing, APOE exists as multiple glycosylated and sialylated glycoforms within cells and in plasma. The extent of glycosylation and sialylation are tissue and context specific. Glycated in plasma VLDL. Post-translationally, phosphorylated by FAM20C in the extracellular medium.

It is found in the secreted. It localises to the extracellular space. The protein resides in the extracellular matrix. Its subcellular location is the extracellular vesicle. The protein localises to the endosome. It is found in the multivesicular body. Its function is as follows. APOE is an apolipoprotein, a protein associating with lipid particles, that mainly functions in lipoprotein-mediated lipid transport between organs via the plasma and interstitial fluids. APOE is a core component of plasma lipoproteins and is involved in their production, conversion and clearance. Apolipoproteins are amphipathic molecules that interact both with lipids of the lipoprotein particle core and the aqueous environment of the plasma. As such, APOE associates with chylomicrons, chylomicron remnants, very low density lipoproteins (VLDL) and intermediate density lipoproteins (IDL) but shows a preferential binding to high-density lipoproteins (HDL). It also binds a wide range of cellular receptors including the LDL receptor/LDLR, the LDL receptor-related proteins LRP1, LRP2 and LRP8 and the very low-density lipoprotein receptor/VLDLR that mediate the cellular uptake of the APOE-containing lipoprotein particles. Finally, APOE also has a heparin-binding activity and binds heparan-sulfate proteoglycans on the surface of cells, a property that supports the capture and the receptor-mediated uptake of APOE-containing lipoproteins by cells. A main function of APOE is to mediate lipoprotein clearance through the uptake of chylomicrons, VLDLs, and HDLs by hepatocytes. APOE is also involved in the biosynthesis by the liver of VLDLs as well as their uptake by peripheral tissues ensuring the delivery of triglycerides and energy storage in muscle, heart and adipose tissues. By participating in the lipoprotein-mediated distribution of lipids among tissues, APOE plays a critical role in plasma and tissues lipid homeostasis. APOE is also involved in two steps of reverse cholesterol transport, the HDLs-mediated transport of cholesterol from peripheral tissues to the liver, and thereby plays an important role in cholesterol homeostasis. First, it is functionally associated with ABCA1 in the biogenesis of HDLs in tissues. Second, it is enriched in circulating HDLs and mediates their uptake by hepatocytes. APOE also plays an important role in lipid transport in the central nervous system, regulating neuron survival and sprouting. The sequence is that of Apolipoprotein E (APOE) from Ctenomys sociabilis (Social tuco-tuco).